The sequence spans 431 residues: Histidine--tRNA ligase (431 aa).

It belongs to the class-II aminoacyl-tRNA synthetase family. In terms of assembly, homodimer.

The protein resides in the cytoplasm. It carries out the reaction tRNA(His) + L-histidine + ATP = L-histidyl-tRNA(His) + AMP + diphosphate + H(+). The protein is Histidine--tRNA ligase of Finegoldia magna (strain ATCC 29328 / DSM 20472 / WAL 2508) (Peptostreptococcus magnus).